Reading from the N-terminus, the 223-residue chain is UPF0441 protein YgiB (223 aa).

Residues 178-195 (TVPKTAMAPKPATTTTVT) are compositionally biased toward low complexity. The interval 178–223 (TVPKTAMAPKPATTTTVTRGGFGESVAKQSTMQRSAAGTSTRSMGG) is disordered. Polar residues predominate over residues 204–223 (AKQSTMQRSAAGTSTRSMGG).

This sequence belongs to the UPF0441 family.

This is UPF0441 protein YgiB from Salmonella enteritidis PT4 (strain P125109).